We begin with the raw amino-acid sequence, 563 residues long: Protein NOXP20 (563 aa).

The disordered stretch occupies residues 1-84; sequence MSDDAGDTLA…ANALEPPLNG (84 aa). The segment covering 56–68 has biased composition (low complexity); that stretch reads AAVQGAGAAAIGP. Position 120 is a phosphoserine (serine 120). The interval 165–206 is disordered; sequence VNSGSSEGAQPNTENGVPEITDAATDQGPAESPPTSPSSASR. Residues 166–179 are compositionally biased toward polar residues; it reads NSGSSEGAQPNTEN. Phosphothreonine occurs at positions 185 and 189. At serine 196 the chain carries Phosphoserine. Residue threonine 199 is modified to Phosphothreonine. Serine 202 and serine 261 each carry phosphoserine. Residues 343–367 are a coiled coil; the sequence is AAKELENEENQEEQGLEEKGEEFAR. A disordered region spans residues 411 to 436; the sequence is SEEETKKEEKEEKSQDPQEDKKEEKK.

This sequence belongs to the FAM114 family.

It is found in the cytoplasm. May play a role in neuronal cell development. This chain is Protein NOXP20 (FAM114A1), found in Homo sapiens (Human).